The sequence spans 198 residues: Recombination protein RecR (198 aa).

The segment at 57–72 adopts a C4-type zinc-finger fold; the sequence is CEKCNTFTEAQICEVC. In terms of domain architecture, Toprim spans 80 to 175; the sequence is TLLCVVETPA…AVTRLARGVP (96 aa).

This sequence belongs to the RecR family.

May play a role in DNA repair. It seems to be involved in an RecBC-independent recombinational process of DNA repair. It may act with RecF and RecO. In Paraburkholderia xenovorans (strain LB400), this protein is Recombination protein RecR.